Here is a 138-residue protein sequence, read N- to C-terminus: Phosphoribosyl-AMP cyclohydrolase (138 aa).

D84 lines the Mg(2+) pocket. C85 contributes to the Zn(2+) binding site. Mg(2+) is bound by residues D86 and D88. Zn(2+) contacts are provided by C102 and C109.

Belongs to the PRA-CH family. Homodimer. The cofactor is Mg(2+). Zn(2+) serves as cofactor.

The protein resides in the cytoplasm. The catalysed reaction is 1-(5-phospho-beta-D-ribosyl)-5'-AMP + H2O = 1-(5-phospho-beta-D-ribosyl)-5-[(5-phospho-beta-D-ribosylamino)methylideneamino]imidazole-4-carboxamide. It participates in amino-acid biosynthesis; L-histidine biosynthesis; L-histidine from 5-phospho-alpha-D-ribose 1-diphosphate: step 3/9. Catalyzes the hydrolysis of the adenine ring of phosphoribosyl-AMP. The protein is Phosphoribosyl-AMP cyclohydrolase of Burkholderia cenocepacia (strain ATCC BAA-245 / DSM 16553 / LMG 16656 / NCTC 13227 / J2315 / CF5610) (Burkholderia cepacia (strain J2315)).